Here is a 300-residue protein sequence, read N- to C-terminus: Tumor necrosis factor receptor superfamily member 6B (300 aa).

An N-terminal signal peptide occupies residues 1-29; that stretch reads MRALEGPGLSLLCLVLALPALLPVPAVRG. 4 TNFR-Cys repeats span residues 31–70, 72–113, 115–150, and 152–193; these read AETP…PTTC, PCPP…NRAC, CRTG…NTQC, and PCPP…DTLC. Disulfide bonds link C49/C62, C52/C70, C73/C88, C91/C105, C95/C113, C115/C126, C132/C150, and C153/C168. N-linked (GlcNAc...) asparagine glycosylation occurs at N173. C174 and C193 form a disulfide bridge.

As to expression, detected in fetal lung, brain and liver. Detected in adult stomach, spinal cord, lymph node, trachea, spleen, colon and lung. Highly expressed in several primary tumors from colon, stomach, rectum, esophagus and in SW480 colon carcinoma cells.

Its subcellular location is the secreted. Functionally, decoy receptor that can neutralize the cytotoxic ligands TNFS14/LIGHT, TNFSF15 and TNFSF6/FASL. Protects against apoptosis. The polypeptide is Tumor necrosis factor receptor superfamily member 6B (TNFRSF6B) (Homo sapiens (Human)).